Reading from the N-terminus, the 330-residue chain is Ribose-phosphate pyrophosphokinase (330 aa).

ATP-binding positions include Asp40–Glu42 and Arg99–Gln100. His133 and Asp174 together coordinate Mg(2+). Lys197 is a catalytic residue. D-ribose 5-phosphate contacts are provided by residues Arg199, Asp223, and Asp227–Thr231.

It belongs to the ribose-phosphate pyrophosphokinase family. Class I subfamily. Homohexamer. Mg(2+) serves as cofactor.

The protein localises to the cytoplasm. It catalyses the reaction D-ribose 5-phosphate + ATP = 5-phospho-alpha-D-ribose 1-diphosphate + AMP + H(+). Its pathway is metabolic intermediate biosynthesis; 5-phospho-alpha-D-ribose 1-diphosphate biosynthesis; 5-phospho-alpha-D-ribose 1-diphosphate from D-ribose 5-phosphate (route I): step 1/1. In terms of biological role, involved in the biosynthesis of the central metabolite phospho-alpha-D-ribosyl-1-pyrophosphate (PRPP) via the transfer of pyrophosphoryl group from ATP to 1-hydroxyl of ribose-5-phosphate (Rib-5-P). This chain is Ribose-phosphate pyrophosphokinase, found in Ureaplasma parvum serovar 3 (strain ATCC 700970).